A 474-amino-acid polypeptide reads, in one-letter code: Tumor necrosis factor receptor superfamily member 1B (474 aa).

An N-terminal signal peptide occupies residues Met-1 to Thr-22. At Val-23 to Gly-258 the chain is on the extracellular side. Thr-30 is a glycosylation site (O-linked (GalNAc...) threonine). TNFR-Cys repeat units follow at residues Gln-39–Ala-77, Asp-78–Cys-119, Ala-120–Ser-164, and Ala-165–Ala-203. 10 disulfide bridges follow: Cys-40/Cys-54, Cys-55/Cys-68, Cys-58/Cys-76, Cys-79/Cys-94, Cys-97/Cys-111, Cys-101/Cys-119, Cys-121/Cys-127, Cys-136/Cys-145, Cys-139/Cys-163, and Cys-166/Cys-181. Asn-69 is a glycosylation site (N-linked (GlcNAc...) asparagine). The N-linked (GlcNAc...) asparagine glycan is linked to Asn-110. The N-linked (GlcNAc...) asparagine glycan is linked to Asn-195. Thr-208 and Thr-224 each carry an O-linked (GalNAc...) threonine glycan. Residues Gln-220 to Pro-239 show a composition bias toward polar residues. The interval Gln-220–Ile-241 is disordered. Residues Ile-259–Arg-288 form a helical membrane-spanning segment. The Cytoplasmic segment spans residues Lys-289–Pro-474. Disordered regions lie at residues Leu-321–Gly-378 and Ser-397–Gly-464. Low complexity-rich tracts occupy residues Ala-324–Ala-338 and Gly-366–Gly-378. Ser-331 is modified (phosphoserine). The span at Glu-429 to Leu-442 shows a compositional bias: polar residues.

Binds to TRAF2. Interacts with BMX. Interacts (activated form) with XPNPEP3.

It is found in the membrane. In terms of biological role, receptor with high affinity for TNFSF2/TNF-alpha and approximately 5-fold lower affinity for homotrimeric TNFSF1/lymphotoxin-alpha. The TRAF1/TRAF2 complex recruits the apoptotic suppressors BIRC2 and BIRC3 to TNFRSF1B/TNFR2. This Rattus norvegicus (Rat) protein is Tumor necrosis factor receptor superfamily member 1B (Tnfrsf1b).